Reading from the N-terminus, the 1162-residue chain is DNA-directed RNA polymerase subunit beta (1162 aa).

Belongs to the RNA polymerase beta chain family. As to quaternary structure, the RNAP catalytic core consists of 2 alpha, 1 beta, 1 beta' and 1 omega subunit. When a sigma factor is associated with the core the holoenzyme is formed, which can initiate transcription.

It catalyses the reaction RNA(n) + a ribonucleoside 5'-triphosphate = RNA(n+1) + diphosphate. Its function is as follows. DNA-dependent RNA polymerase catalyzes the transcription of DNA into RNA using the four ribonucleoside triphosphates as substrates. In Clavibacter sepedonicus (Clavibacter michiganensis subsp. sepedonicus), this protein is DNA-directed RNA polymerase subunit beta.